Here is a 112-residue protein sequence, read N- to C-terminus: Ribonuclease P protein component (112 aa).

The protein belongs to the RnpA family. In terms of assembly, consists of a catalytic RNA component (M1 or rnpB) and a protein subunit.

It carries out the reaction Endonucleolytic cleavage of RNA, removing 5'-extranucleotides from tRNA precursor.. In terms of biological role, RNaseP catalyzes the removal of the 5'-leader sequence from pre-tRNA to produce the mature 5'-terminus. It can also cleave other RNA substrates such as 4.5S RNA. The protein component plays an auxiliary but essential role in vivo by binding to the 5'-leader sequence and broadening the substrate specificity of the ribozyme. The chain is Ribonuclease P protein component from Clostridium kluyveri (strain ATCC 8527 / DSM 555 / NBRC 12016 / NCIMB 10680 / K1).